The primary structure comprises 419 residues: Peptide chain release factor subunit 1 (419 aa).

Belongs to the eukaryotic release factor 1 family. As to quaternary structure, heterodimer of two subunits, one of which binds GTP.

It localises to the cytoplasm. Directs the termination of nascent peptide synthesis (translation) in response to the termination codons UAA, UAG and UGA. This chain is Peptide chain release factor subunit 1, found in Methanococcus vannielii (strain ATCC 35089 / DSM 1224 / JCM 13029 / OCM 148 / SB).